A 155-amino-acid polypeptide reads, in one-letter code: Ribosome maturation factor RimP (155 aa).

This sequence belongs to the RimP family.

It is found in the cytoplasm. Its function is as follows. Required for maturation of 30S ribosomal subunits. This chain is Ribosome maturation factor RimP, found in Agathobacter rectalis (strain ATCC 33656 / DSM 3377 / JCM 17463 / KCTC 5835 / VPI 0990) (Eubacterium rectale).